Consider the following 250-residue polypeptide: Intermembrane phospholipid transport system lipoprotein MlaA (250 aa).

The first 18 residues, 1-18 (MKTKTILTALLSAIALTG), serve as a signal peptide directing secretion. Cys-19 carries N-palmitoyl cysteine lipidation. A lipid anchor (S-diacylglycerol cysteine) is attached at Cys-19.

This sequence belongs to the MlaA family.

Its subcellular location is the cell outer membrane. In terms of biological role, involved in a phospholipid transport pathway that maintains lipid asymmetry in the outer membrane by retrograde trafficking of phospholipids from the outer membrane to the inner membrane. The protein is Intermembrane phospholipid transport system lipoprotein MlaA of Haemophilus influenzae (strain ATCC 51907 / DSM 11121 / KW20 / Rd).